Reading from the N-terminus, the 958-residue chain is Glycine dehydrogenase (decarboxylating) (958 aa).

An N6-(pyridoxal phosphate)lysine modification is found at lysine 707.

The protein belongs to the GcvP family. The glycine cleavage system is composed of four proteins: P, T, L and H. Requires pyridoxal 5'-phosphate as cofactor.

The enzyme catalyses N(6)-[(R)-lipoyl]-L-lysyl-[glycine-cleavage complex H protein] + glycine + H(+) = N(6)-[(R)-S(8)-aminomethyldihydrolipoyl]-L-lysyl-[glycine-cleavage complex H protein] + CO2. Its function is as follows. The glycine cleavage system catalyzes the degradation of glycine. The P protein binds the alpha-amino group of glycine through its pyridoxal phosphate cofactor; CO(2) is released and the remaining methylamine moiety is then transferred to the lipoamide cofactor of the H protein. The protein is Glycine dehydrogenase (decarboxylating) of Stutzerimonas stutzeri (strain A1501) (Pseudomonas stutzeri).